Consider the following 189-residue polypeptide: MVWLLAILAYLLGSLSFAVLLSRWFGTQDPRASGSGNPGATNMLRVAGKKLAILTLLGDVGKGLLPVLVARWLGLGVMEEAWVGIAAVIGHLYPLYFNFRGGKGVATAAGMLLGLYPPAVLLAAAAWLLTFKLSRTSSLASLVATPLTLPLLAWQQPGALLPMTVLTGLIVWRHRANLRDLFAGRERHF.

5 consecutive transmembrane segments (helical) span residues 1–21, 50–70, 72–92, 111–131, and 151–171; these read MVWLLAILAYLLGSLSFAVLL, KLAILTLLGDVGKGLLPVLVA, WLGLGVMEEAWVGIAAVIGHL, MLLGLYPPAVLLAAAAWLLTF, and LLAWQQPGALLPMTVLTGLIV.

The protein belongs to the PlsY family. Probably interacts with PlsX.

It is found in the cell inner membrane. The enzyme catalyses an acyl phosphate + sn-glycerol 3-phosphate = a 1-acyl-sn-glycero-3-phosphate + phosphate. It functions in the pathway lipid metabolism; phospholipid metabolism. Its function is as follows. Catalyzes the transfer of an acyl group from acyl-phosphate (acyl-PO(4)) to glycerol-3-phosphate (G3P) to form lysophosphatidic acid (LPA). This enzyme utilizes acyl-phosphate as fatty acyl donor, but not acyl-CoA or acyl-ACP. The sequence is that of Glycerol-3-phosphate acyltransferase from Pseudomonas aeruginosa (strain LESB58).